Here is a 347-residue protein sequence, read N- to C-terminus: Photosystem II protein D1 (347 aa).

Transmembrane regions (helical) follow at residues 32 to 49, 121 to 136, and 145 to 159; these read YIGWFGILMFPLLVLATV, HFILGAGAYMGREWEF, and WIFVAFSAPLVAASA. H121 lines the chlorophyll a pocket. Y129 is a pheophytin a binding site. Residues D173 and E192 each coordinate [CaMn4O5] cluster. The helical transmembrane segment at 200 to 221 threads the bilayer; sequence FHILGVAAVFGGSLFSAMHGSL. Residue H201 coordinates chlorophyll a. A quinone-binding positions include H218 and 267–268; that span reads SF. H218 contacts Fe cation. H275 lines the Fe cation pocket. The chain crosses the membrane as a helical span at residues 277–291; sequence FLAAWPVIGIWFTAL. [CaMn4O5] cluster-binding residues include H335, E336, D345, and A347.

The protein belongs to the reaction center PufL/M/PsbA/D family. As to quaternary structure, PSII is composed of 1 copy each of membrane proteins PsbA, PsbB, PsbC, PsbD, PsbE, PsbF, PsbH, PsbI, PsbJ, PsbK, PsbL, PsbM, PsbT, PsbX, PsbY, PsbZ, Psb30/Ycf12, at least 3 peripheral proteins of the oxygen-evolving complex and a large number of cofactors. It forms dimeric complexes. It depends on The D1/D2 heterodimer binds P680, chlorophylls that are the primary electron donor of PSII, and subsequent electron acceptors. It shares a non-heme iron and each subunit binds pheophytin, quinone, additional chlorophylls, carotenoids and lipids. D1 provides most of the ligands for the Mn4-Ca-O5 cluster of the oxygen-evolving complex (OEC). There is also a Cl(-1) ion associated with D1 and D2, which is required for oxygen evolution. The PSII complex binds additional chlorophylls, carotenoids and specific lipids. as a cofactor. Post-translationally, tyr-164 forms a radical intermediate that is referred to as redox-active TyrZ, YZ or Y-Z.

The protein localises to the plastid. It localises to the chloroplast thylakoid membrane. It catalyses the reaction 2 a plastoquinone + 4 hnu + 2 H2O = 2 a plastoquinol + O2. Its function is as follows. Photosystem II (PSII) is a light-driven water:plastoquinone oxidoreductase that uses light energy to abstract electrons from H(2)O, generating O(2) and a proton gradient subsequently used for ATP formation. It consists of a core antenna complex that captures photons, and an electron transfer chain that converts photonic excitation into a charge separation. The D1/D2 (PsbA/PsbD) reaction center heterodimer binds P680, the primary electron donor of PSII as well as several subsequent electron acceptors. The chain is Photosystem II protein D1 from Heterocapsa niei (Dinoflagellate).